Consider the following 179-residue polypeptide: Large ribosomal subunit protein uL6 (179 aa).

This sequence belongs to the universal ribosomal protein uL6 family. Part of the 50S ribosomal subunit.

Functionally, this protein binds to the 23S rRNA, and is important in its secondary structure. It is located near the subunit interface in the base of the L7/L12 stalk, and near the tRNA binding site of the peptidyltransferase center. This is Large ribosomal subunit protein uL6 from Koribacter versatilis (strain Ellin345).